The primary structure comprises 119 residues: Large ribosomal subunit protein bL20 (119 aa).

This sequence belongs to the bacterial ribosomal protein bL20 family.

In terms of biological role, binds directly to 23S ribosomal RNA and is necessary for the in vitro assembly process of the 50S ribosomal subunit. It is not involved in the protein synthesizing functions of that subunit. In Clostridium botulinum (strain Alaska E43 / Type E3), this protein is Large ribosomal subunit protein bL20.